A 61-amino-acid chain; its full sequence is MGKTGSVTWVKIKKRNSNEYRLVPTKWQDYKKPGPNQKYTSDGKKRRRIRRSQKSILGVRS.

A disordered region spans residues 23–61 (VPTKWQDYKKPGPNQKYTSDGKKRRRIRRSQKSILGVRS). Over residues 44–53 (KKRRRIRRSQ) the composition is skewed to basic residues.

This is an uncharacterized protein from Archaeoglobus fulgidus (strain ATCC 49558 / DSM 4304 / JCM 9628 / NBRC 100126 / VC-16).